Reading from the N-terminus, the 854-residue chain is DNA mismatch repair protein MutS (854 aa).

Glycine 608–serine 615 contacts ATP.

It belongs to the DNA mismatch repair MutS family.

Its function is as follows. This protein is involved in the repair of mismatches in DNA. It is possible that it carries out the mismatch recognition step. This protein has a weak ATPase activity. The chain is DNA mismatch repair protein MutS from Leuconostoc mesenteroides subsp. mesenteroides (strain ATCC 8293 / DSM 20343 / BCRC 11652 / CCM 1803 / JCM 6124 / NCDO 523 / NBRC 100496 / NCIMB 8023 / NCTC 12954 / NRRL B-1118 / 37Y).